A 473-amino-acid polypeptide reads, in one-letter code: Crt homolog 1 (473 aa).

Over 1–49 (MTNNDKEKQPLLSSINNEDDNGATINIVEPVPWYSNIPQKIKNSMSKET) the chain is Cytoplasmic. The helical transmembrane segment at 50–70 (ITILIYVVLYVTSGVINSVLL) threads the bilayer. Over 71-80 (KKVMNKFTNY) the chain is Vacuolar. Residues 81–101 (AFFLSQLTNFGYVPIFGAVTA) traverse the membrane as a helical segment. Residues 102–121 (YKIFFTKDIPQETRDFPTRK) are Cytoplasmic-facing. A helical membrane pass occupies residues 122-142 (FAIMGALDAITGFFVVIGGVS). Residues 143 to 146 (TSGP) are Vacuolar-facing. A helical transmembrane segment spans residues 147-167 (LQQLLNQAIIPFTMIASFIFL). At 168 to 175 (KERYSLIQ) the chain is on the cytoplasmic side. Residues 176–196 (LGGALVIIGGVVTSLIPSLLG) traverse the membrane as a helical segment. The Vacuolar segment spans residues 197 to 207 (GSSGGNKPFWN). Residues 208–228 (FFYLLSVIPGALSNVYKDIGF) form a helical membrane-spanning segment. Residues 229–248 (QAVADMDVWYLQYWDSLYQS) are Cytoplasmic-facing. The chain crosses the membrane as a helical span at residues 249 to 269 (IFGLFLFPVNNWLPPPATVKF). Residues 270–322 (EQILPFMKEGAECLAGINSIIPSYINGTSSFTATSCTYAPDATITCDDCHNAW) are Vacuolar-facing. N295 carries N-linked (GlcNAc...) asparagine glycosylation. The chain crosses the membrane as a helical span at residues 323 to 343 (IVIILYMTINIIYNIFILLVL). Over 344 to 352 (KHAGATVYS) the chain is Cytoplasmic. Residues 353-373 (IANTLRLPLTNIVFSIHFIMG) form a helical membrane-spanning segment. Residue S374 is a topological domain, vacuolar. A helical membrane pass occupies residues 375–395 (AVSPFSGLSVAGLVIILVGLG). Residues 396–473 (GYRVGSMIKQ…AANNNNYGDA (78 aa)) are Cytoplasmic-facing.

This sequence belongs to the CRT-like transporter family.

The protein resides in the vacuole membrane. Its function is as follows. Nutrient transporter. Involved in maintaining the osmotic homeostasis of the digestive vacuole. The sequence is that of Crt homolog 1 (crtp1) from Dictyostelium discoideum (Social amoeba).